A 258-amino-acid chain; its full sequence is Thiamine thiazole synthase (258 aa).

Residues serine 36, 55 to 56 (ER), glycine 63, valine 127, and 153 to 155 (HVD) each bind NAD(+). 2 residues coordinate Fe cation: aspartate 155 and histidine 170. Methionine 224 contributes to the NAD(+) binding site. Arginine 234 serves as a coordination point for glycine.

Belongs to the THI4 family. In terms of assembly, homooctamer; tetramer of dimers. It depends on Fe(2+) as a cofactor.

It catalyses the reaction hydrogen sulfide + glycine + NAD(+) = ADP-5-ethyl-4-methylthiazole-2-carboxylate + nicotinamide + 3 H2O + H(+). The protein operates within cofactor biosynthesis; thiamine diphosphate biosynthesis. Functionally, involved in the biosynthesis of the thiazole moiety of thiamine. Catalyzes the conversion of NAD and glycine to adenosine diphosphate 5-(2-hydroxyethyl)-4-methylthiazole-2-carboxylate (ADT), an adenylated thiazole intermediate, using free sulfide as a source of sulfur. The protein is Thiamine thiazole synthase of Desulfosudis oleivorans (strain DSM 6200 / JCM 39069 / Hxd3) (Desulfococcus oleovorans).